The following is a 478-amino-acid chain: Adenosylhomocysteinase (478 aa).

Substrate-binding residues include Thr56, Asp139, and Glu201. Position 202–204 (202–204 (TTT)) interacts with NAD(+). Substrate contacts are provided by Lys231 and Asp235. NAD(+) contacts are provided by residues Asn236, 265 to 270 (GYGDVG), Glu288, Asn323, 344 to 346 (IGH), and Asn392.

This sequence belongs to the adenosylhomocysteinase family. It depends on NAD(+) as a cofactor.

The protein resides in the cytoplasm. The enzyme catalyses S-adenosyl-L-homocysteine + H2O = L-homocysteine + adenosine. It functions in the pathway amino-acid biosynthesis; L-homocysteine biosynthesis; L-homocysteine from S-adenosyl-L-homocysteine: step 1/1. May play a key role in the regulation of the intracellular concentration of adenosylhomocysteine. The chain is Adenosylhomocysteinase from Corynebacterium diphtheriae (strain ATCC 700971 / NCTC 13129 / Biotype gravis).